The primary structure comprises 406 residues: Luteothin monooxygenase (406 aa).

Positions 98, 102, 296, 350, 353, and 355 each coordinate heme b.

This sequence belongs to the cytochrome P450 family. As to quaternary structure, monomer. Heme b serves as cofactor.

It catalyses the reaction luteothin + 4 reduced [2Fe-2S]-[ferredoxin] + 2 O2 + 4 H(+) = aureothin + 4 oxidized [2Fe-2S]-[ferredoxin] + 3 H2O. It functions in the pathway antibiotic biosynthesis. Its pathway is polyketide biosynthesis. Functionally, bifunctional cytochrome P450 protein involved in the biosynthesis of the antibiotic aureothin, a nitroaryl polyketide metabolite with antifungal, cytotoxic and insecticidal activities. Catalyzes the hydroxylation of luteothin (also called deoxyaureothin), leading to the formation of the intermediate (7R)-7-hydroxydeoxyaureothin, followed by the formation of the aureothin tetrahydrofuran ring, the final step in the biosynthesis of aureothin. In Streptomyces thioluteus, this protein is Luteothin monooxygenase.